Consider the following 358-residue polypeptide: Type II restriction enzyme SacI (358 aa).

It carries out the reaction Endonucleolytic cleavage of DNA to give specific double-stranded fragments with terminal 5'-phosphates.. Its function is as follows. A subtype P restriction enzyme that recognizes the double-stranded sequence 5'-GAGCTC-3' and cleaves after T-5. This Streptomyces achromogenes protein is Type II restriction enzyme SacI.